The following is an 84-amino-acid chain: Toxin Ts4 (84 aa).

A signal peptide spans 1-19; that stretch reads MKRMILFISCLLLIDIVVG. The 62-residue stretch at 21–82 folds into the LCN-type CS-alpha/beta domain; sequence REGYPADSKG…IWTSETNKCG (62 aa). 4 cysteine pairs are disulfide-bonded: cysteine 31–cysteine 81, cysteine 35–cysteine 57, cysteine 43–cysteine 62, and cysteine 47–cysteine 64. The residue at position 81 (cysteine 81) is a Cysteine amide. Residues 82-84 constitute a propeptide that is removed on maturation; that stretch reads GKK.

Belongs to the long (4 C-C) scorpion toxin superfamily. Sodium channel inhibitor family. Alpha subfamily. As to expression, expressed by the venom gland.

The protein resides in the secreted. Functionally, not toxic. Induces an immune response similar to that induced by whole venom. Induces a dose dependent release of the neurotransmitters glutamic acid and gamma aminobutyric acid from rat brain synaptosomes. Thus, polyclonal antibodies raised against this protein can neutralize the effects of the venom. The sequence is that of Toxin Ts4 from Tityus serrulatus (Brazilian scorpion).